Reading from the N-terminus, the 527-residue chain is Bifunctional purine biosynthesis protein PurH (527 aa).

One can recognise an MGS-like domain in the interval 1 to 149 (MASDFLPVRR…KNFARVAVAT (149 aa)).

It belongs to the PurH family.

It carries out the reaction (6R)-10-formyltetrahydrofolate + 5-amino-1-(5-phospho-beta-D-ribosyl)imidazole-4-carboxamide = 5-formamido-1-(5-phospho-D-ribosyl)imidazole-4-carboxamide + (6S)-5,6,7,8-tetrahydrofolate. It catalyses the reaction IMP + H2O = 5-formamido-1-(5-phospho-D-ribosyl)imidazole-4-carboxamide. The protein operates within purine metabolism; IMP biosynthesis via de novo pathway; 5-formamido-1-(5-phospho-D-ribosyl)imidazole-4-carboxamide from 5-amino-1-(5-phospho-D-ribosyl)imidazole-4-carboxamide (10-formyl THF route): step 1/1. It participates in purine metabolism; IMP biosynthesis via de novo pathway; IMP from 5-formamido-1-(5-phospho-D-ribosyl)imidazole-4-carboxamide: step 1/1. The chain is Bifunctional purine biosynthesis protein PurH from Xanthomonas euvesicatoria pv. vesicatoria (strain 85-10) (Xanthomonas campestris pv. vesicatoria).